Consider the following 835-residue polypeptide: Replication origin-binding protein (835 aa).

Positions 54–215 (PGMSQTRPVT…SGLRGDENIH (162 aa)) constitute a Helicase ATP-binding domain. 67–74 (APMGSGKT) provides a ligand contact to ATP.

This sequence belongs to the herpesviridae OriBP family. In terms of assembly, homodimer. Interacts with the major DNA-binding protein. Interacts with the helicase/primase component 52 and the polymerase accessory protein.

It localises to the host nucleus. Functions as a docking protein to recruit essential components of the viral replication machinery to viral DNA origins. In the presence of the major DNA-binding protein, opens dsDNA leading to a conformational change in the origin that facilitates DNA unwinding and subsequent replication. In Varicella-zoster virus (strain Oka vaccine) (HHV-3), this protein is Replication origin-binding protein.